We begin with the raw amino-acid sequence, 417 residues long: Argininosuccinate synthase (417 aa).

Residue 9-17 (AYSGGLDTS) coordinates ATP. Residue tyrosine 87 coordinates L-citrulline. Glycine 117 contributes to the ATP binding site. Threonine 119, asparagine 123, and aspartate 124 together coordinate L-aspartate. An L-citrulline-binding site is contributed by asparagine 123. Positions 127, 175, 184, 260, and 272 each coordinate L-citrulline.

This sequence belongs to the argininosuccinate synthase family. Type 1 subfamily. Homotetramer.

The protein resides in the cytoplasm. It catalyses the reaction L-citrulline + L-aspartate + ATP = 2-(N(omega)-L-arginino)succinate + AMP + diphosphate + H(+). The protein operates within amino-acid biosynthesis; L-arginine biosynthesis; L-arginine from L-ornithine and carbamoyl phosphate: step 2/3. This chain is Argininosuccinate synthase, found in Oceanobacillus iheyensis (strain DSM 14371 / CIP 107618 / JCM 11309 / KCTC 3954 / HTE831).